A 530-amino-acid polypeptide reads, in one-letter code: Protein MGF 505-1R (530 aa).

It belongs to the asfivirus MGF 505 family.

Functionally, plays a role in virus cell tropism, and may be required for efficient virus replication in macrophages. This chain is Protein MGF 505-1R, found in African swine fever virus (isolate Tick/Malawi/Lil 20-1/1983) (ASFV).